Reading from the N-terminus, the 79-residue chain is Probable [Fe-S]-dependent transcriptional repressor (79 aa).

Iron-sulfur cluster contacts are provided by C54, C59, C62, and C68.

It belongs to the FeoC family.

Functionally, may function as a transcriptional regulator that controls feoABC expression. The sequence is that of Probable [Fe-S]-dependent transcriptional repressor from Photorhabdus laumondii subsp. laumondii (strain DSM 15139 / CIP 105565 / TT01) (Photorhabdus luminescens subsp. laumondii).